A 232-amino-acid polypeptide reads, in one-letter code: MENQPKLNSSKEVIAFLAERFPHCFSAEGEARPLKIGIFQDLVDRVAGEMNLSKTQLRSALRLYTSSWRYLYGVKPGATRVDLDGNPCGELDEQHVEHARKQLEEAKARVQAQRAEQQAKKREAAAAAGEKEDAPRRERKPRPTTPRRKEGAERKPRAQKPVEKAPKTAKAPREEQHTPVSDISALTVGQALKVKAGQNAMDATVLEITKDGVRVQLNSGMSLIVRAEHLVF.

The disordered stretch occupies residues 105 to 182; the sequence is EAKARVQAQR…REEQHTPVSD (78 aa). Residues 117–136 are compositionally biased toward basic and acidic residues; that stretch reads QQAKKREAAAAAGEKEDAPR. The span at 137–146 shows a compositional bias: basic residues; that stretch reads RERKPRPTTP. Over residues 147-177 the composition is skewed to basic and acidic residues; it reads RRKEGAERKPRAQKPVEKAPKTAKAPREEQH.

It belongs to the ProQ family.

The protein resides in the cytoplasm. Its function is as follows. RNA chaperone with significant RNA binding, RNA strand exchange and RNA duplexing activities. May regulate ProP activity through an RNA-based, post-transcriptional mechanism. This chain is RNA chaperone ProQ, found in Shigella dysenteriae serotype 1 (strain Sd197).